Here is a 139-residue protein sequence, read N- to C-terminus: Large-conductance mechanosensitive channel (139 aa).

A run of 3 helical transmembrane segments spans residues 19–39 (VGVI…ADII), 40–60 (MPIV…LPLS), and 81–101 (GNFL…FMVI).

It belongs to the MscL family. As to quaternary structure, homopentamer.

It localises to the cell inner membrane. In terms of biological role, channel that opens in response to stretch forces in the membrane lipid bilayer. May participate in the regulation of osmotic pressure changes within the cell. The chain is Large-conductance mechanosensitive channel from Nitrobacter winogradskyi (strain ATCC 25391 / DSM 10237 / CIP 104748 / NCIMB 11846 / Nb-255).